A 336-amino-acid chain; its full sequence is Casein kinase I isoform beta (336 aa).

The 269-residue stretch at 17-285 (YKLVREIGFG…YLRQLFRLLF (269 aa)) folds into the Protein kinase domain. Residues 23–31 (IGFGSFGHV) and K46 each bind ATP. D136 serves as the catalytic Proton acceptor. The segment covering 309–320 (ASSSSGEGQQAQ) has biased composition (low complexity). The interval 309 to 336 (ASSSSGEGQQAQTPTGKSDNTKSEMKHS) is disordered. Basic and acidic residues predominate over residues 327-336 (DNTKSEMKHS).

Belongs to the protein kinase superfamily. CK1 Ser/Thr protein kinase family. Casein kinase I subfamily. As to quaternary structure, monomer.

It localises to the cytoplasm. It catalyses the reaction L-seryl-[protein] + ATP = O-phospho-L-seryl-[protein] + ADP + H(+). The catalysed reaction is L-threonyl-[protein] + ATP = O-phospho-L-threonyl-[protein] + ADP + H(+). Functionally, casein kinases are operationally defined by their preferential utilization of acidic proteins such as caseins as substrates. It can phosphorylate a large number of proteins. Participates in Wnt signaling. This is Casein kinase I isoform beta (CSNK1B) from Bos taurus (Bovine).